Reading from the N-terminus, the 308-residue chain is Probable GTP 3',8-cyclase (308 aa).

One can recognise a Radical SAM core domain in the interval 4 to 224 (RFGRPLEDLR…QIRKKHFRPR (221 aa)). Arginine 13 contributes to the GTP binding site. Residues cysteine 20, cysteine 24, and cysteine 27 each coordinate [4Fe-4S] cluster. Residue lysine 60 coordinates GTP. S-adenosyl-L-methionine is bound at residue glycine 64. Threonine 90 lines the GTP pocket. Serine 114 is an S-adenosyl-L-methionine binding site. Residue lysine 151 participates in GTP binding. [4Fe-4S] cluster-binding residues include cysteine 245 and cysteine 248. Residue 250–252 (RIR) coordinates GTP. Cysteine 262 contributes to the [4Fe-4S] cluster binding site.

The protein belongs to the radical SAM superfamily. MoaA family. It depends on [4Fe-4S] cluster as a cofactor.

The enzyme catalyses GTP + AH2 + S-adenosyl-L-methionine = (8S)-3',8-cyclo-7,8-dihydroguanosine 5'-triphosphate + 5'-deoxyadenosine + L-methionine + A + H(+). The protein operates within cofactor biosynthesis; molybdopterin biosynthesis. Its function is as follows. Catalyzes the cyclization of GTP to (8S)-3',8-cyclo-7,8-dihydroguanosine 5'-triphosphate. The sequence is that of Probable GTP 3',8-cyclase from Saccharolobus islandicus (strain Y.N.15.51 / Yellowstone #2) (Sulfolobus islandicus).